Consider the following 67-residue polypeptide: uncharacterized protein (67 aa).

2 consecutive transmembrane segments (helical) span residues asparagine 10–isoleucine 32 and alanine 44–tryptophan 66.

The protein localises to the cell membrane. This is an uncharacterized protein from Archaeoglobus fulgidus (strain ATCC 49558 / DSM 4304 / JCM 9628 / NBRC 100126 / VC-16).